The sequence spans 430 residues: Adenylosuccinate synthetase (430 aa).

Residues 13–19 (GDEGKGK) and 41–43 (GHT) contribute to the GTP site. Aspartate 14 acts as the Proton acceptor in catalysis. Aspartate 14 and glycine 41 together coordinate Mg(2+). Residues 14–17 (DEGK), 39–42 (NAGH), threonine 130, arginine 144, glutamine 225, threonine 240, and arginine 304 each bind IMP. The active-site Proton donor is histidine 42. A substrate-binding site is contributed by 300-306 (STTGRKR). Residues arginine 306, 332 to 334 (KLD), and 414 to 416 (STG) each bind GTP.

This sequence belongs to the adenylosuccinate synthetase family. In terms of assembly, homodimer. Mg(2+) serves as cofactor.

It is found in the cytoplasm. The enzyme catalyses IMP + L-aspartate + GTP = N(6)-(1,2-dicarboxyethyl)-AMP + GDP + phosphate + 2 H(+). Its pathway is purine metabolism; AMP biosynthesis via de novo pathway; AMP from IMP: step 1/2. Its function is as follows. Plays an important role in the de novo pathway of purine nucleotide biosynthesis. Catalyzes the first committed step in the biosynthesis of AMP from IMP. The protein is Adenylosuccinate synthetase of Buchnera aphidicola subsp. Schizaphis graminum (strain Sg).